The sequence spans 651 residues: Protein cueball (651 aa).

Positions 1–21 (MILRLFILLSIITVYLQLSVG) are cleaved as a signal peptide. Over 22–540 (IQQQFEFAIT…VCLAPNAWTG (519 aa)) the chain is Extracellular. N-linked (GlcNAc...) asparagine glycosylation is found at N77, N102, and N114. 3 LDL-receptor class B repeats span residues 115–162 (RTIY…DICG), 163–207 (RKLY…DQGA), and 208–253 (KRIF…TRNA). N183 carries N-linked (GlcNAc...) asparagine glycosylation. Residues 290–311 (VEGEEGTGAMDDNDIWPVGDFE) are disordered. An N-linked (GlcNAc...) asparagine glycan is attached at N324. EGF-like domains follow at residues 374-408 (QLDE…TRCE), 409-440 (TNEC…YSGE), and 443-480 (EVKK…LRCE). Cystine bridges form between C383–C396, C398–C407, C412–C421, C416–C431, C447–C457, C451–C468, and C470–C479. Residues N482 and N499 are each glycosylated (N-linked (GlcNAc...) asparagine). Residues 541 to 561 (SVLMPLMISLILILLLLTIFI) form a helical membrane-spanning segment. Residues 562 to 651 (HGLRRLYKPK…LIHNMEDDLY (90 aa)) lie on the Cytoplasmic side of the membrane.

This sequence belongs to the cueball family.

It is found in the cell membrane. Functionally, has a role in spermatogenesis and oogenesis. This Drosophila willistoni (Fruit fly) protein is Protein cueball.